A 170-amino-acid chain; its full sequence is Peptide deformylase-like (170 aa).

E139 is a catalytic residue.

It belongs to the polypeptide deformylase family.

The protein is Peptide deformylase-like of Bradyrhizobium diazoefficiens (strain JCM 10833 / BCRC 13528 / IAM 13628 / NBRC 14792 / USDA 110).